We begin with the raw amino-acid sequence, 373 residues long: Nuclear migration protein JNM1 (373 aa).

Residues 33–53 form a disordered region; that stretch reads EVKEDGQQEEQEEASSRKDGL. Ser91 bears the Phosphoserine mark. 3 coiled-coil regions span residues 114–139, 200–245, and 331–367; these read KIEN…LATE, EDRK…EFEN, and WLKA…EDEA.

As to quaternary structure, component of the dynactin complex composed of at least ARP1, JNM1, NIP100 and ARP10. Dynactin comprises a short rod of ARP1 polymers attached to ARP10 at its pointed-end and probably associated with the capping protein at its barbed-end. The rod structure is implicated in dynein cargo binding. A sidearm formed by NIP100 projects from the ARP1 filament and is implicated in motor binding. Interacts with ARP1.

It is found in the cytoplasm. The protein localises to the cytoskeleton. Component of the dynactin complex which assists cytoplasmic dynein by increasing its processivity and by regulation of its cargo binding. The dynactin complex is required for the spindle translocation late in anaphase and is involved in a cell wall synthesis checkpoint. JNM1 is associated with the rod and links it to the projecting sidearm. Required for proper nuclear migration during the mitotic cell cycle and for astral microtubule development. This Saccharomyces cerevisiae (strain ATCC 204508 / S288c) (Baker's yeast) protein is Nuclear migration protein JNM1 (JNM1).